A 599-amino-acid chain; its full sequence is Serine/threonine-protein kinase haspin homolog (599 aa).

In terms of domain architecture, Protein kinase spans Pro-287–Ser-599. Residues Ile-293 to Ala-301, Lys-310, Glu-407 to Asp-412, Asp-448 to Asn-453, and Asp-486 to Thr-488 each bind ATP. Residue Asp-448 is the Proton acceptor of the active site.

The protein belongs to the protein kinase superfamily. Ser/Thr protein kinase family. Haspin subfamily. In terms of tissue distribution, expressed in meristems and primordia of root tips, lateral roots, shoot apex, leaves and flowers.

The protein localises to the cytoplasm. It localises to the perinuclear region. Its subcellular location is the nucleus. It is found in the chromosome. The protein resides in the cytoskeleton. The protein localises to the phragmoplast. The enzyme catalyses L-seryl-[protein] + ATP = O-phospho-L-seryl-[protein] + ADP + H(+). It carries out the reaction L-threonyl-[protein] + ATP = O-phospho-L-threonyl-[protein] + ADP + H(+). Threonine-protein kinase that phosphorylates histone H3 in vitro at 'Thr-3' (H3T3ph) and 'Thr-11' (H3T11ph), but not at 'Ser-10' (H3S10ph) or 'Ser-28' (H3S28ph). Plays a role in mitotic cell division during plant growth. Threonine-protein kinase that phosphorylates histone H3 in vitro at 'Thr-3' (H3T3ph), but not at 'Thr-11' (H3T11ph), 'Ser-10' (H3S10ph) or 'Ser-28' (H3S28ph). Involved in histone H3 phosphorylation in mitotic cells. Contributes to organ and plant development, as well as embryonic patterning. The chain is Serine/threonine-protein kinase haspin homolog from Arabidopsis thaliana (Mouse-ear cress).